The following is a 321-amino-acid chain: tRNA-dihydrouridine synthase B (321 aa).

FMN contacts are provided by residues 16-18 and Gln-70; that span reads PMA. The active-site Proton donor is Cys-100. FMN-binding positions include Lys-139, 200–202, and 224–225; these read NGD and GR.

It belongs to the Dus family. DusB subfamily. FMN is required as a cofactor.

The enzyme catalyses a 5,6-dihydrouridine in tRNA + NAD(+) = a uridine in tRNA + NADH + H(+). The catalysed reaction is a 5,6-dihydrouridine in tRNA + NADP(+) = a uridine in tRNA + NADPH + H(+). Functionally, catalyzes the synthesis of 5,6-dihydrouridine (D), a modified base found in the D-loop of most tRNAs, via the reduction of the C5-C6 double bond in target uridines. In Escherichia coli O157:H7, this protein is tRNA-dihydrouridine synthase B.